The sequence spans 399 residues: Probable tRNA sulfurtransferase (399 aa).

The THUMP domain maps to 60–165 (YAVMERLKRV…TEGTYISCET (106 aa)). ATP is bound by residues 183-184 (LL), 208-209 (HF), R265, G287, and Q296.

The protein belongs to the ThiI family.

It localises to the cytoplasm. It carries out the reaction [ThiI sulfur-carrier protein]-S-sulfanyl-L-cysteine + a uridine in tRNA + 2 reduced [2Fe-2S]-[ferredoxin] + ATP + H(+) = [ThiI sulfur-carrier protein]-L-cysteine + a 4-thiouridine in tRNA + 2 oxidized [2Fe-2S]-[ferredoxin] + AMP + diphosphate. The enzyme catalyses [ThiS sulfur-carrier protein]-C-terminal Gly-Gly-AMP + S-sulfanyl-L-cysteinyl-[cysteine desulfurase] + AH2 = [ThiS sulfur-carrier protein]-C-terminal-Gly-aminoethanethioate + L-cysteinyl-[cysteine desulfurase] + A + AMP + 2 H(+). It participates in cofactor biosynthesis; thiamine diphosphate biosynthesis. In terms of biological role, catalyzes the ATP-dependent transfer of a sulfur to tRNA to produce 4-thiouridine in position 8 of tRNAs, which functions as a near-UV photosensor. Also catalyzes the transfer of sulfur to the sulfur carrier protein ThiS, forming ThiS-thiocarboxylate. This is a step in the synthesis of thiazole, in the thiamine biosynthesis pathway. The sulfur is donated as persulfide by IscS. In Brevibacillus brevis (strain 47 / JCM 6285 / NBRC 100599), this protein is Probable tRNA sulfurtransferase.